A 408-amino-acid polypeptide reads, in one-letter code: Glutamate N-acetyltransferase (408 aa).

Substrate is bound by residues Thr150, Lys176, Thr189, Glu271, Asn403, and Thr408. The Nucleophile role is filled by Thr189.

This sequence belongs to the ArgJ family. As to quaternary structure, heterotetramer of two alpha and two beta chains.

It is found in the cytoplasm. The enzyme catalyses N(2)-acetyl-L-ornithine + L-glutamate = N-acetyl-L-glutamate + L-ornithine. It participates in amino-acid biosynthesis; L-arginine biosynthesis; L-ornithine and N-acetyl-L-glutamate from L-glutamate and N(2)-acetyl-L-ornithine (cyclic): step 1/1. Its function is as follows. Catalyzes the transfer of the acetyl group from N(2)-acetylornithine to glutamate, forming N-acetylglutamate and L-ornithine. The protein is Glutamate N-acetyltransferase of Methanococcus maripaludis (strain C6 / ATCC BAA-1332).